The sequence spans 226 residues: NADH-ubiquinone oxidoreductase chain 6 (226 aa).

The next 5 membrane-spanning stretches (helical) occupy residues 2–22 (STLG…LVIL), 28–48 (IYSI…LLTV), 56–76 (IYIL…VMMI), 90–110 (YNIY…ILIT), and 169–189 (IWFI…IYIT).

It belongs to the complex I subunit 6 family.

It is found in the mitochondrion membrane. The catalysed reaction is a ubiquinone + NADH + 5 H(+)(in) = a ubiquinol + NAD(+) + 4 H(+)(out). Core subunit of the mitochondrial membrane respiratory chain NADH dehydrogenase (Complex I) that is believed to belong to the minimal assembly required for catalysis. Complex I functions in the transfer of electrons from NADH to the respiratory chain. The immediate electron acceptor for the enzyme is believed to be ubiquinone. The sequence is that of NADH-ubiquinone oxidoreductase chain 6 (nad6) from Dictyostelium discoideum (Social amoeba).